Reading from the N-terminus, the 267-residue chain is Tryptophan synthase alpha chain (267 aa).

Active-site proton acceptor residues include Glu-49 and Asp-60.

Belongs to the TrpA family. Tetramer of two alpha and two beta chains.

It carries out the reaction (1S,2R)-1-C-(indol-3-yl)glycerol 3-phosphate + L-serine = D-glyceraldehyde 3-phosphate + L-tryptophan + H2O. It functions in the pathway amino-acid biosynthesis; L-tryptophan biosynthesis; L-tryptophan from chorismate: step 5/5. Functionally, the alpha subunit is responsible for the aldol cleavage of indoleglycerol phosphate to indole and glyceraldehyde 3-phosphate. This Rippkaea orientalis (strain PCC 8801 / RF-1) (Cyanothece sp. (strain PCC 8801)) protein is Tryptophan synthase alpha chain.